The chain runs to 434 residues: 3-phosphoshikimate 1-carboxyvinyltransferase (434 aa).

Residues Lys22, Ser23, and Arg27 each coordinate 3-phosphoshikimate. Residue Lys22 participates in phosphoenolpyruvate binding. Residues Gly93 and Arg121 each contribute to the phosphoenolpyruvate site. 6 residues coordinate 3-phosphoshikimate: Ser168, Ser169, Gln170, Ser199, Asp320, and Lys347. Gln170 lines the phosphoenolpyruvate pocket. Asp320 serves as the catalytic Proton acceptor. Arg351, Arg394, and Lys419 together coordinate phosphoenolpyruvate.

It belongs to the EPSP synthase family. Monomer.

It is found in the cytoplasm. It carries out the reaction 3-phosphoshikimate + phosphoenolpyruvate = 5-O-(1-carboxyvinyl)-3-phosphoshikimate + phosphate. It functions in the pathway metabolic intermediate biosynthesis; chorismate biosynthesis; chorismate from D-erythrose 4-phosphate and phosphoenolpyruvate: step 6/7. In terms of biological role, catalyzes the transfer of the enolpyruvyl moiety of phosphoenolpyruvate (PEP) to the 5-hydroxyl of shikimate-3-phosphate (S3P) to produce enolpyruvyl shikimate-3-phosphate and inorganic phosphate. This Burkholderia orbicola (strain AU 1054) protein is 3-phosphoshikimate 1-carboxyvinyltransferase.